The sequence spans 529 residues: MSSSKIKELREGLMSSSKWSMAPGMMMQQNQPRPATTTPPISRGNEDADEGLNTARSFSSFQDLKGMSGDAKEQESATLVHLTKGRAHPRSRRPPRQISIDSAKKEETKNTGSTKAADTKSSVEATISPLKDTKSPSNASVFPIKPTESKTSTTKDSETAKEEDDASSSTTKAVEATTSKASSAHTDTLATSASNSDRGASTPEMVVKAEKREGSTSPIPYSSLSIAERIKQAQNTPFLESKVLPQNNETSDEENVDVKPAAGTVKNVMQAFLQPATPAKDTASKEPSKSSQQPVRTKPRIAQSPFLAQDAKENGGNVEVSSPLSFSASKSPAAVDSSTKTPTEQVNVVSKQAPTTSSTSVISPDPLQTAAPSANVNEVIASLESKVVTRRTGSGNNYRVGLRNVSGSERTKSLSKESPVEPEKPALPDATSSSTPTTENKESWTNQGIKSSQQRSANASPATSPSNQASIHASFTKESSTHSSPSFTLESLFSGAPRVVELTRFSQPSPACSRALLARWKEEYRTSIH.

Positions 1-11 are enriched in basic and acidic residues; sequence MSSSKIKELRE. 4 disordered regions span residues 1 to 222, 237 to 256, 271 to 372, and 393 to 488; these read MSSS…IPYS, PFLE…EENV, AFLQ…TAAP, and GSGN…PSFT. The segment covering 27 to 40 has biased composition (polar residues); that stretch reads MQQNQPRPATTTPP. A compositionally biased stretch (basic residues) spans 83–95; it reads TKGRAHPRSRRPP. A compositionally biased stretch (polar residues) spans 110 to 125; that stretch reads NTGSTKAADTKSSVEA. Ser-128 carries the post-translational modification Phosphoserine. Residues 170–199 are compositionally biased toward polar residues; it reads TTKAVEATTSKASSAHTDTLATSASNSDRG. Position 217 is a phosphoserine (Ser-217). Residues 237–249 show a composition bias toward polar residues; sequence PFLESKVLPQNNE. Over residues 321–334 the composition is skewed to low complexity; the sequence is SSPLSFSASKSPAA. Positions 336–362 are enriched in polar residues; that stretch reads DSSTKTPTEQVNVVSKQAPTTSSTSVI. Residues 409 to 426 show a composition bias toward basic and acidic residues; that stretch reads ERTKSLSKESPVEPEKPA. Polar residues predominate over residues 430–455; sequence ATSSSTPTTENKESWTNQGIKSSQQR. Residues 456–470 show a composition bias toward low complexity; that stretch reads SANASPATSPSNQAS. Polar residues predominate over residues 471 to 488; the sequence is IHASFTKESSTHSSPSFT.

The protein resides in the cytoplasm. This is an uncharacterized protein from Schizosaccharomyces pombe (strain 972 / ATCC 24843) (Fission yeast).